The sequence spans 115 residues: Large ribosomal subunit protein bL20 (115 aa).

The protein belongs to the bacterial ribosomal protein bL20 family.

Binds directly to 23S ribosomal RNA and is necessary for the in vitro assembly process of the 50S ribosomal subunit. It is not involved in the protein synthesizing functions of that subunit. This chain is Large ribosomal subunit protein bL20, found in Prochlorococcus marinus (strain AS9601).